The following is a 294-amino-acid chain: UPF0761 membrane protein MADE_1017605/MADE_1018330 (294 aa).

The next 6 helical transmembrane spans lie at 45–65, 99–119, 141–161, 182–202, 213–233, and 247–267; these read LLSL…FPAF, ASQM…MLIS, FAIY…SVVV, FLLS…LYMV, AFVG…GFAL, and ALAV…IVLF.

It belongs to the UPF0761 family.

It localises to the cell inner membrane. In Alteromonas mediterranea (strain DSM 17117 / CIP 110805 / LMG 28347 / Deep ecotype), this protein is UPF0761 membrane protein MADE_1017605/MADE_1018330.